A 210-amino-acid polypeptide reads, in one-letter code: Na(+)-translocating NADH-quinone reductase subunit D (210 aa).

A run of 5 helical transmembrane segments spans residues 42–62 (FVMT…VSVI), 72–92 (IIVQ…ILKA), 103–123 (VFVG…AFAM), 131–151 (LIDG…VGFF), and 178–198 (NGLM…IWAI).

Belongs to the NqrDE/RnfAE family. Composed of six subunits; NqrA, NqrB, NqrC, NqrD, NqrE and NqrF.

Its subcellular location is the cell inner membrane. The enzyme catalyses a ubiquinone + n Na(+)(in) + NADH + H(+) = a ubiquinol + n Na(+)(out) + NAD(+). In terms of biological role, NQR complex catalyzes the reduction of ubiquinone-1 to ubiquinol by two successive reactions, coupled with the transport of Na(+) ions from the cytoplasm to the periplasm. NqrA to NqrE are probably involved in the second step, the conversion of ubisemiquinone to ubiquinol. The protein is Na(+)-translocating NADH-quinone reductase subunit D of Vibrio vulnificus (strain YJ016).